We begin with the raw amino-acid sequence, 457 residues long: Argininosuccinate lyase (457 aa).

This sequence belongs to the lyase 1 family. Argininosuccinate lyase subfamily.

Its subcellular location is the cytoplasm. It carries out the reaction 2-(N(omega)-L-arginino)succinate = fumarate + L-arginine. It participates in amino-acid biosynthesis; L-arginine biosynthesis; L-arginine from L-ornithine and carbamoyl phosphate: step 3/3. In Haemophilus influenzae (strain ATCC 51907 / DSM 11121 / KW20 / Rd), this protein is Argininosuccinate lyase.